We begin with the raw amino-acid sequence, 809 residues long: Carbon monoxide dehydrogenase large chain (809 aa).

Position 388 (cysteine 388) interacts with Cu(+). A Mo-molybdopterin cytosine dinucleotide-binding site is contributed by glutamate 763.

In terms of assembly, dimer of heterotrimers. Each heterotrimer consists of a large, a medium and a small subunit. Cu(+) serves as cofactor. Mo-molybdopterin cytosine dinucleotide is required as a cofactor.

The enzyme catalyses CO + a quinone + H2O = a quinol + CO2. Catalyzes the oxidation of carbon monoxide to carbon dioxide. In Afipia carboxidovorans (strain ATCC 49405 / DSM 1227 / KCTC 32145 / OM5) (Oligotropha carboxidovorans), this protein is Carbon monoxide dehydrogenase large chain (coxL).